The following is a 478-amino-acid chain: Aspartyl/glutamyl-tRNA(Asn/Gln) amidotransferase subunit B 1 (478 aa).

It belongs to the GatB/GatE family. GatB subfamily. As to quaternary structure, heterotrimer of A, B and C subunits.

It carries out the reaction L-glutamyl-tRNA(Gln) + L-glutamine + ATP + H2O = L-glutaminyl-tRNA(Gln) + L-glutamate + ADP + phosphate + H(+). The catalysed reaction is L-aspartyl-tRNA(Asn) + L-glutamine + ATP + H2O = L-asparaginyl-tRNA(Asn) + L-glutamate + ADP + phosphate + 2 H(+). Allows the formation of correctly charged Asn-tRNA(Asn) or Gln-tRNA(Gln) through the transamidation of misacylated Asp-tRNA(Asn) or Glu-tRNA(Gln) in organisms which lack either or both of asparaginyl-tRNA or glutaminyl-tRNA synthetases. The reaction takes place in the presence of glutamine and ATP through an activated phospho-Asp-tRNA(Asn) or phospho-Glu-tRNA(Gln). This chain is Aspartyl/glutamyl-tRNA(Asn/Gln) amidotransferase subunit B 1, found in Syntrophus aciditrophicus (strain SB).